The primary structure comprises 193 residues: Putative deoxynucleotide monophosphate kinase (193 aa).

K10 is a binding site for dGMP. Residues G13 and T16 each contribute to the ATP site. 7 residues coordinate dGMP: L36, K37, K58, D122, R124, E128, and S155.

The protein belongs to the dNMP kinase family.

It catalyses the reaction a 2'-deoxyribonucleoside 5'-phosphate + ATP = a 2'-deoxyribonucleoside 5'-diphosphate + ADP. In Acanthamoeba polyphaga mimivirus (APMV), this protein is Putative deoxynucleotide monophosphate kinase.